The following is a 746-amino-acid chain: NAD(P)H-quinone oxidoreductase subunit 5, chloroplastic (746 aa).

The next 16 membrane-spanning stretches (helical) occupy residues 9 to 29 (WIIP…LLLF), 40 to 60 (WTFL…YLSI), 89 to 109 (IDPL…LVLI), 125 to 145 (FAYM…SNLI), 147 to 167 (VYFF…FWFT), 185 to 205 (GDFG…SFEF), 221 to 241 (VNFL…IAKS), 258 to 278 (TPIS…FLVA), 280 to 300 (LLPL…IGII), 327 to 347 (LGYM…FHLI), 354 to 374 (ALLF…VGYS), 396 to 416 (TAFL…CFWS), 425 to 445 (LLFS…TAFY), 547 to 567 (ILFP…IGIP), 608 to 628 (FSVS…KPFY), and 723 to 743 (YLFL…FFYF).

It belongs to the complex I subunit 5 family. As to quaternary structure, NDH is composed of at least 16 different subunits, 5 of which are encoded in the nucleus.

The protein localises to the plastid. It localises to the chloroplast thylakoid membrane. It carries out the reaction a plastoquinone + NADH + (n+1) H(+)(in) = a plastoquinol + NAD(+) + n H(+)(out). The catalysed reaction is a plastoquinone + NADPH + (n+1) H(+)(in) = a plastoquinol + NADP(+) + n H(+)(out). In terms of biological role, NDH shuttles electrons from NAD(P)H:plastoquinone, via FMN and iron-sulfur (Fe-S) centers, to quinones in the photosynthetic chain and possibly in a chloroplast respiratory chain. The immediate electron acceptor for the enzyme in this species is believed to be plastoquinone. Couples the redox reaction to proton translocation, and thus conserves the redox energy in a proton gradient. The sequence is that of NAD(P)H-quinone oxidoreductase subunit 5, chloroplastic (ndhF) from Barbarea verna (Land cress).